Here is a 552-residue protein sequence, read N- to C-terminus: N-acetylglucosamine-6-sulfatase (552 aa).

Positions 1–36 are cleaved as a signal peptide; it reads MRLLPLAPGRLRRGSPRHLPSCSPALLLLVLGGCLG. Positions 55, 56, and 91 each coordinate Ca(2+). C91 serves as the catalytic Nucleophile. C91 bears the 3-oxoalanine (Cys) mark. Residues N111, N117, N183, N198, N210, N279, and N317 are each glycosylated (N-linked (GlcNAc...) asparagine). The Ca(2+) site is built by D326 and N327. N-linked (GlcNAc...) asparagine glycans are attached at residues N362, N387, N405, N422, N449, and N480. S541 is subject to Phosphoserine.

It belongs to the sulfatase family. It depends on Ca(2+) as a cofactor. Post-translationally, the form A (78 kDa) is processed by internal peptidase cleavage to a 32 kDa N-terminal species (form B) and a 48 kDa C-terminal species. In terms of processing, the conversion to 3-oxoalanine (also known as C-formylglycine, FGly), of a serine or cysteine residue in prokaryotes and of a cysteine residue in eukaryotes, is critical for catalytic activity.

Its subcellular location is the lysosome. It carries out the reaction Hydrolysis of the 6-sulfate groups of the N-acetyl-D-glucosamine 6-sulfate units of heparan sulfate and keratan sulfate.. In terms of biological role, hydrolyzes 6-sulfate groups in N-acetyl-d-glucosaminide units of heparin sulfate and keratan sulfate. The chain is N-acetylglucosamine-6-sulfatase (GNS) from Homo sapiens (Human).